The sequence spans 361 residues: Dihydroorotate dehydrogenase (quinone) (361 aa).

Residues 69 to 73 (AGFDK) and Thr93 each bind FMN. Lys73 is a binding site for substrate. 118 to 122 (NRLGF) provides a ligand contact to substrate. FMN-binding residues include Asn147 and Asn180. Residue Asn180 participates in substrate binding. The Nucleophile role is filled by Ser183. Asn185 is a binding site for substrate. FMN contacts are provided by Lys221 and Thr249. Substrate is bound at residue 250–251 (NT). FMN contacts are provided by residues Gly271, Gly300, and 321–322 (YT).

This sequence belongs to the dihydroorotate dehydrogenase family. Type 2 subfamily. Monomer. The cofactor is FMN.

Its subcellular location is the cell membrane. It catalyses the reaction (S)-dihydroorotate + a quinone = orotate + a quinol. The protein operates within pyrimidine metabolism; UMP biosynthesis via de novo pathway; orotate from (S)-dihydroorotate (quinone route): step 1/1. In terms of biological role, catalyzes the conversion of dihydroorotate to orotate with quinone as electron acceptor. The protein is Dihydroorotate dehydrogenase (quinone) of Roseiflexus sp. (strain RS-1).